A 100-amino-acid chain; its full sequence is Serine protease inhibitor 1 protein (100 aa).

Residues Met1–Cys20 form the signal peptide. 5 disulfides stabilise this stretch: Cys42-Cys74, Cys51-Cys69, Cys54-Cys65, Cys58-Cys93, and Cys76-Cys90. One can recognise a TIL domain in the interval Cys42–Cys93.

The protein resides in the secreted. This chain is Serine protease inhibitor 1 protein, found in Caenorhabditis elegans.